We begin with the raw amino-acid sequence, 232 residues long: Ornithine carbamoyltransferase (232 aa).

Carbamoyl phosphate contacts are provided by residues Gln-15, Arg-39, and 66 to 69 (HPTQ). Residues Asn-99, Asp-163, and 167–168 (SM) contribute to the L-ornithine site. Residues 204–207 (HCLP) and Thr-232 contribute to the carbamoyl phosphate site.

Belongs to the aspartate/ornithine carbamoyltransferase superfamily. OTCase family.

It is found in the cytoplasm. The enzyme catalyses carbamoyl phosphate + L-ornithine = L-citrulline + phosphate + H(+). Its pathway is amino-acid biosynthesis; L-arginine biosynthesis; L-arginine from L-ornithine and carbamoyl phosphate: step 1/3. Reversibly catalyzes the transfer of the carbamoyl group from carbamoyl phosphate (CP) to the N(epsilon) atom of ornithine (ORN) to produce L-citrulline. The protein is Ornithine carbamoyltransferase (argF) of Neisseria subflava.